Here is a 427-residue protein sequence, read N- to C-terminus: Glutamate-1-semialdehyde 2,1-aminomutase 2 (427 aa).

The residue at position 267 (K267) is an N6-(pyridoxal phosphate)lysine.

The protein belongs to the class-III pyridoxal-phosphate-dependent aminotransferase family. HemL subfamily. As to quaternary structure, homodimer. Requires pyridoxal 5'-phosphate as cofactor.

The protein resides in the cytoplasm. The enzyme catalyses (S)-4-amino-5-oxopentanoate = 5-aminolevulinate. It participates in porphyrin-containing compound metabolism; protoporphyrin-IX biosynthesis; 5-aminolevulinate from L-glutamyl-tRNA(Glu): step 2/2. In Staphylococcus haemolyticus (strain JCSC1435), this protein is Glutamate-1-semialdehyde 2,1-aminomutase 2.